The primary structure comprises 219 residues: Thiopurine S-methyltransferase (219 aa).

Residues Trp-10, Leu-45, Glu-66, and Arg-123 each coordinate S-adenosyl-L-methionine.

It belongs to the class I-like SAM-binding methyltransferase superfamily. TPMT family.

The protein resides in the cytoplasm. The catalysed reaction is S-adenosyl-L-methionine + a thiopurine = S-adenosyl-L-homocysteine + a thiopurine S-methylether.. This is Thiopurine S-methyltransferase from Shewanella pealeana (strain ATCC 700345 / ANG-SQ1).